A 122-amino-acid polypeptide reads, in one-letter code: Large ribosomal subunit protein uL14 (122 aa).

This sequence belongs to the universal ribosomal protein uL14 family. Part of the 50S ribosomal subunit. Forms a cluster with proteins L3 and L19. In the 70S ribosome, L14 and L19 interact and together make contacts with the 16S rRNA in bridges B5 and B8.

Its function is as follows. Binds to 23S rRNA. Forms part of two intersubunit bridges in the 70S ribosome. This is Large ribosomal subunit protein uL14 from Microcystis aeruginosa (strain NIES-843 / IAM M-2473).